Here is a 456-residue protein sequence, read N- to C-terminus: MKIEEVKSTVRTQRIAAHSHVKGLGLDEVGAAVHSAAGLVGQKAAREAAGIVVDLIKSKKMAGRALLLAGPPGTGKTAIALAIAQELGNKVPFCPMVGSEVFSNEIKKTEVLMENFRRSIGLRIRETKEVYEGEVTELTPVETENPMGGYGKTISNVVIGLKTAKGTKQLKLDPSIFDALQKEKVEVGDVIYIEANSGAVKRQGRSDTFATEFDLETEEYVPLPKGDVHKKKEVIQDVTLHDLDVANARPQGGQDVLSMMGQLMKPKKTEITDKLRMEINKVVNKYIDQGIAELVPGVLFIDEIHMLDLETFTYLHKSLESPIAPIVIFATNRGRCVIRGTTDIVSPHGIPLDLLDRLLIIRTLLYSTADMEQIIKLRAQTEGLQLEENAFTRLSEIGTSSTLRYAVQLLTPAHQMCKVNGRNQISKDDIEDVHSLFLDAKRSSKHLSEKNNKFML.

ATP is bound at residue 70–77; sequence GPPGTGKT.

Belongs to the RuvB family. As to quaternary structure, forms homohexameric rings. May form a dodecamer with rept made of two stacked hexameric rings. Component of the chromatin remodeling Ino80 complex. Interacts with Myc and rept. In terms of tissue distribution, higher expression occurs in primordia of mesoderm, anterior and posterior midgut and cephalic furrow early in gastrulation, as well as in endoderm and mesoderm lineages during germ band extension. Later in development expression is only maintained in endoderm cells. Expressed in thoracic and abdominal segment neural precursors of all embryonic chordotonal organs.

It localises to the nucleus. It catalyses the reaction ATP + H2O = ADP + phosphate + H(+). Its function is as follows. Acts as a transcriptional coactivator in Wg signaling caused by altered arm signaling. Pont and rept interfere antagonistically with nuclear arm signaling function, and are required to enhance or reduce arm activity, respectively. Also an essential cofactor for the normal function of Myc; required for cellular proliferation and growth. Proposed core component of the chromatin remodeling Ino80 complex which is involved in transcriptional regulation, DNA replication and probably DNA repair. In Drosophila melanogaster (Fruit fly), this protein is RuvB-like helicase 1.